The following is a 264-amino-acid chain: MNDSLKAQCGAEFLGTGLFLFFGIGCLSALKVAGASLGLWEICIIWGLGISLAVYLTAGISGGHLNPAVTIALWLFACFPKQKVLPYIIAQFAGAFGGALLAYVLYSSLFTEFETAHHMVRGSVESLQLASIFSTYPAAALNVWQAALVEVVITSILMGMIMALTDDGNGIPKGPLAPLLIGILVAVIGASTGPLTGFAMNPARDFGPKLFTWLAGWGNMAMSGGREIPYFIVPIVAPVIGACAGAAIYRYFIGKNLPCNRCEL.

Helical transmembrane passes span G10–L30 and I42–G62. The short motif at N66–A68 is the NPA 1 element. 3 helical membrane passes run V84–V104, V143–A163, and L179–A199. The NPA 2 signature appears at N201–A203. Residues I228 to I248 form a helical membrane-spanning segment.

This sequence belongs to the MIP/aquaporin (TC 1.A.8) family.

It is found in the cell inner membrane. Functionally, probably facilitates diffusion of 1,2-propanediol (1,2-PD) into the cell. Modeling suggests active transport of 1,2-PD is required at low extracellular concentrations to allow maximal growth and saturation of PduP/PduQ within the bacterial microcompartment (BMC); this protein may be the cellular transporter. In terms of biological role, the 1,2-PD-specific bacterial microcompartment (BMC) concentrates low levels of 1,2-PD catabolic enzymes, concentrates volatile reaction intermediates thus enhancing pathway flux and keeps the level of toxic, mutagenic propionaldehyde low. This chain is Propanediol uptake facilitator PduF, found in Salmonella typhimurium (strain LT2 / SGSC1412 / ATCC 700720).